The chain runs to 328 residues: Apoptosis facilitator Bcl-2-like protein 14 (328 aa).

The residue at position 44 (Ser-44) is a Phosphoserine. Positions 213 to 227 match the BH3 motif; it reads IVELLKFSGDQLGRE. Residues 309–316 carry the BH2 motif; it reads WVQQNGGW.

The protein belongs to the Bcl-2 family. In terms of processing, phosphorylated by MELK, leading to inhibit its pro-apoptotic function.

The protein localises to the cytoplasm. Plays a role in apoptosis. The chain is Apoptosis facilitator Bcl-2-like protein 14 (Bcl2l14) from Mus musculus (Mouse).